A 530-amino-acid polypeptide reads, in one-letter code: Cation transporter HKT2;1 (530 aa).

The Cytoplasmic portion of the chain corresponds to 1 to 40 (MTSIYHDFIHNKLQSFGRIGRYFVNFVVLAHRFIALHIHP). A run of 2 helical transmembrane segments spans residues 41–61 (FWIQ…LLMF) and 102–122 (IVVI…FLGL). The Cytoplasmic segment spans residues 123–186 (MLRLNHKHNP…DLKRSKRLRW (64 aa)). A run of 2 helical transmembrane segments spans residues 187 to 207 (FLGF…FLLV) and 260 to 280 (GLLL…PLFL). Residues 281–317 (RLLIWFLGKVTKLRELKLMIKNPEELQYDYLLPKLPT) lie on the Cytoplasmic side of the membrane. The next 2 helical transmembrane spans lie at 318–338 (AFLA…FGAV) and 372–392 (IDCS…MYLP). At 393–418 (PSTTFALSNGDEKTANKKAKRKLGLV) the chain is on the cytoplasmic side. 2 helical membrane passes run 419-439 (VQNL…VAFI) and 494-514 (SLSG…MLYG). Over 515 to 530 (RLKAFTKGTGEYWRLW) the chain is Cytoplasmic.

This sequence belongs to the TrkH potassium transport family. HKT (TC 2.A.38.3) subfamily. In terms of tissue distribution, expressed in epidermis and vascular tissue of endodermis in roots, and in cells surrounding the vasculature in leaves.

Its subcellular location is the membrane. It carries out the reaction Na(+)(in) = Na(+)(out). Functionally, seems to be involved in regulation of potassium-sodium homeostasis. Seems to act as a high-affinity sodium transporter, which mediates increased sodium uptake in roots under potassium deficiency and contributes to sodium accumulation and salt toxicity. Involved in nutritional sodium uptake and distribution in potassium-starved roots to allow plant growth. May also act as a potassium transporter. Functions as a sodium-potassium cotransporter. The chain is Cation transporter HKT2;1 from Oryza sativa subsp. indica (Rice).